The primary structure comprises 246 residues: Homeobox protein Hox-B4a (246 aa).

The disordered stretch occupies residues 23 to 125; that stretch reads YSQSDYLPSH…SQNTSTVSSR (103 aa). Polar residues-rich tracts occupy residues 39-48 and 112-123; these read AQRQDPSFQH and QTPTSQNTSTVS. The Antp-type hexapeptide motif lies at 130–135; the sequence is VYPWMK. The homeobox DNA-binding region spans 151–210; that stretch reads PKRSRTAYTRQQVLELEKEFHYNRYLTRRRRVEIAHTLCLSERQIKIWFQNRRMKWKKDH. The tract at residues 210–246 is disordered; sequence HKLPNTKIRSNSASTNSSGCPTLCSNQSRASGPPPSL. Residues 216–239 are compositionally biased toward polar residues; that stretch reads KIRSNSASTNSSGCPTLCSNQSRA.

This sequence belongs to the Antp homeobox family. Deformed subfamily.

The protein resides in the nucleus. Functionally, sequence-specific transcription factor which is part of a developmental regulatory system that provides cells with specific positional identities on the anterior-posterior axis. The protein is Homeobox protein Hox-B4a (hoxb4a) of Danio rerio (Zebrafish).